Consider the following 297-residue polypeptide: MASEREQISRKVALIALIANLILMAGKVFFGLVGDSEAVFADGIHSAADVVASIAVLAVIGISNKPPDQDHPFGHGKAEVISEAIVGIILVIVSVYILIEAILSFVKGPSVPQYSALFAALISYVAKEILYRYSIKQGKKWNSKAIIAIAYDHKGDIVASLAAFIGVLLAIIGNSRGWSYLLYADAIASAIVAYLIFKISMELIRPSVDVLMEKSVDPELIEEYKAVIFQCDQVKRIDRIRAREHGHYKLLDVRLSLDHDLTIKQGHDIAREIRNEIKRQFSDVEEVLIHVNPYFEE.

A run of 6 helical transmembrane segments spans residues 12 to 32, 43 to 63, 85 to 105, 111 to 131, 155 to 175, and 177 to 197; these read VALIALIANLILMAGKVFFGL, GIHSAADVVASIAVLAVIGIS, IVGIILVIVSVYILIEAILSF, VPQYSALFAALISYVAKEILY, GDIVASLAAFIGVLLAIIGNS, and GWSYLLYADAIASAIVAYLIF.

It belongs to the cation diffusion facilitator (CDF) transporter (TC 2.A.4) family.

The protein localises to the cell membrane. Its function is as follows. Primary efflux pump for manganese. May prevent manganese intoxication. In Bacillus subtilis (strain 168), this protein is Manganese efflux system protein MneP.